The following is a 331-amino-acid chain: Probable allantoicase (331 aa).

The protein belongs to the allantoicase family.

The catalysed reaction is allantoate + H2O = (S)-ureidoglycolate + urea. It participates in nitrogen metabolism; (S)-allantoin degradation; (S)-ureidoglycolate from allantoate (aminidohydrolase route): step 1/1. The protein is Probable allantoicase of Pseudomonas syringae pv. tomato (strain ATCC BAA-871 / DC3000).